The chain runs to 247 residues: Cell division protein ZapD (247 aa).

Belongs to the ZapD family. Interacts with FtsZ.

It is found in the cytoplasm. Its function is as follows. Cell division factor that enhances FtsZ-ring assembly. Directly interacts with FtsZ and promotes bundling of FtsZ protofilaments, with a reduction in FtsZ GTPase activity. The chain is Cell division protein ZapD from Enterobacter sp. (strain 638).